A 498-amino-acid chain; its full sequence is Glutamate--tRNA ligase (498 aa).

The 'HIGH' region motif lies at 11 to 21 (PSPTGHLHIGN). Residues 260–264 (KLSKR) carry the 'KMSKS' region motif. ATP is bound at residue K263.

The protein belongs to the class-I aminoacyl-tRNA synthetase family. Glutamate--tRNA ligase type 1 subfamily. Monomer.

It is found in the cytoplasm. It catalyses the reaction tRNA(Glu) + L-glutamate + ATP = L-glutamyl-tRNA(Glu) + AMP + diphosphate. Functionally, catalyzes the attachment of glutamate to tRNA(Glu) in a two-step reaction: glutamate is first activated by ATP to form Glu-AMP and then transferred to the acceptor end of tRNA(Glu). This is Glutamate--tRNA ligase from Leuconostoc citreum (strain KM20).